Reading from the N-terminus, the 381-residue chain is Guanine nucleotide-binding protein G(s) subunit alpha (381 aa).

Cysteine 3 is lipidated: S-palmitoyl cysteine. In terms of domain architecture, G-alpha spans 36–381 (ALHRLLLLGA…RMHLQKYELL (346 aa)). The segment at 39–52 (RLLLLGAGESGKST) is G1 motif. Residues 44 to 51 (GAGESGKS), 183 to 189 (LRCRVLT), 208 to 212 (GVGGQ), 277 to 280 (NKQD), and alanine 353 each bind GTP. 2 residues coordinate Mg(2+): serine 51 and threonine 189. Residues 181 to 189 (DILRCRVLT) form a G2 motif region. The segment at 204–213 (FYMFGVGGQR) is G3 motif. Residues 273-280 (ILFLNKQD) are G4 motif. The tract at residues 351–356 (TTAVDT) is G5 motif.

It belongs to the G-alpha family. G(s) subfamily. As to quaternary structure, g proteins are composed of 3 units; alpha, beta and gamma. The alpha chain contains the guanine nucleotide binding site.

In terms of biological role, guanine nucleotide-binding proteins (G proteins) are involved as modulators or transducers in various transmembrane signaling systems. The G(s) protein is involved in hormonal regulation of adenylate cyclase: it activates the cyclase in response to beta-adrenergic stimuli. The protein is Guanine nucleotide-binding protein G(s) subunit alpha of Geodia cydonium (Sponge).